A 544-amino-acid polypeptide reads, in one-letter code: Spore germination protein KA (544 aa).

Residues 1-36 are disordered; it reads MPLFSKRKNNTDSKDKQNTDERNQEQQQEKERPVLI. Over residues 9–33 the composition is skewed to basic and acidic residues; it reads NNTDSKDKQNTDERNQEQQQEKERP. 5 helical membrane-spanning segments follow: residues 279–299, 321–341, 392–412, 416–436, and 443–463; these read FAII…FVQF, VLVF…TTFH, AVSI…GIVS, VIIV…AMAI, and FIFI…GIIM. Over residues 504–523 the composition is skewed to basic and acidic residues; the sequence is KRPESVSKEDKVRQGKDQRP. The interval 504–544 is disordered; sequence KRPESVSKEDKVRQGKDQRPEPAASRGMVNKDLEEGDQNGT.

The protein belongs to the GerABKA family.

It localises to the cell membrane. Functionally, involved in the germination response to the combination of glucose, fructose, L-asparagine, and KCl. This is Spore germination protein KA (gerKA) from Bacillus subtilis (strain 168).